A 257-amino-acid chain; its full sequence is UPF0246 protein ACICU_02469 (257 aa).

It belongs to the UPF0246 family.

The polypeptide is UPF0246 protein ACICU_02469 (Acinetobacter baumannii (strain ACICU)).